Reading from the N-terminus, the 631-residue chain is 1-deoxy-D-xylulose-5-phosphate synthase (631 aa).

Thiamine diphosphate is bound by residues H78 and 119–121 (AHS). D150 is a Mg(2+) binding site. Residues 151–152 (GA), N179, Y286, and E368 contribute to the thiamine diphosphate site. Position 179 (N179) interacts with Mg(2+).

The protein belongs to the transketolase family. DXPS subfamily. Homodimer. It depends on Mg(2+) as a cofactor. Thiamine diphosphate serves as cofactor.

The catalysed reaction is D-glyceraldehyde 3-phosphate + pyruvate + H(+) = 1-deoxy-D-xylulose 5-phosphate + CO2. The protein operates within metabolic intermediate biosynthesis; 1-deoxy-D-xylulose 5-phosphate biosynthesis; 1-deoxy-D-xylulose 5-phosphate from D-glyceraldehyde 3-phosphate and pyruvate: step 1/1. Its function is as follows. Catalyzes the acyloin condensation reaction between C atoms 2 and 3 of pyruvate and glyceraldehyde 3-phosphate to yield 1-deoxy-D-xylulose-5-phosphate (DXP). This chain is 1-deoxy-D-xylulose-5-phosphate synthase, found in Verminephrobacter eiseniae (strain EF01-2).